A 568-amino-acid polypeptide reads, in one-letter code: MKETIQGTGSWGPEPPGPGTTYSNPRRERLRWPLPPKPRLKSGGGFGPDPGSGTTVPTRRLPAPRPSFDASASEEEEEEEEEDEEEVAAWRLPPRWGQLGASQRSRALRPSHRKTCSQRRRRAMRAFQMLLYSKSTSLTFHWKLWGRHRGRRRNLAHPKNHLSPQEGGATPQVPSPCCRFDSPRGLPPPRLGLLGALMAEDGMRGSPPVPSGPPMEEDGLRWTPKSPLDPDSGLLSCTLPNGFGGLSGPEGERSLAPPDASILISNVCSIGDHVAQELFQSSDLGIAEEADRTGEKAGQHSPLREEHVTCVQSILDEFLQTYGSLIPLSTDEVVEKLEDIFQQEFSTPSRKSLVLQLIQSYQRMPGNAMVRGFRVSYKRHVLTMDDLGTLYGQNWLNDQVMNMYGDLVMDTVPEKVHFFNSFFYDKLRTKGYDGVKRWTKNVDIFNKELLLIPIHLEVHWSLISVDVRRRTITYFDSQRTLNRRCPKHIAKYLQAEAVKKDRLDFHQGWKGYFKMNVARQNNDSDCGAFVLQYCKHLALSQPFSFTQQDMPKLRRQIYKELCHCKLTV.

The disordered stretch occupies residues 1 to 119; sequence MKETIQGTGS…PSHRKTCSQR (119 aa). Phosphoserine occurs at positions 52, 71, and 73. Residues 72–87 show a composition bias toward acidic residues; the sequence is ASEEEEEEEEEDEEEV. Basic residues predominate over residues 106-119; it reads RALRPSHRKTCSQR. 2 short sequence motifs (nuclear localization signal) span residues 119–122 and 147–153; these read RRRR and RHRGRRR. Residues 155-174 form a disordered region; it reads LAHPKNHLSPQEGGATPQVP. Ser163 is subject to Phosphoserine. Residue Thr170 is modified to Phosphothreonine. Phosphoserine occurs at positions 175, 182, 206, and 226. The tract at residues 380-537 is protease; it reads HVLTMDDLGT…AFVLQYCKHL (158 aa). Active-site residues include His459 and Asp476. Cys526 serves as the catalytic Nucleophile.

This sequence belongs to the peptidase C48 family. Component of some MLL1/MLL complex, at least composed of the core components KMT2A/MLL1, ASH2L, HCFC1/HCF1, WDR5 and RBBP5, as well as the facultative components BACC1, CHD8, E2F6, HSP70, INO80C, KANSL1, LAS1L, MAX, MCRS1, MGA, MYST1/MOF, PELP1, PHF20, PRP31, RING2, RUVB1/TIP49A, RUVB2/TIP49B, SENP3, TAF1, TAF4, TAF6, TAF7, TAF9 and TEX10. Interacts with EP300, NPM1 and CDCA8. Component of the 5FMC complex, at least composed of PELP1, LAS1L, TEX10, WDR18 and SENP3; the complex interacts with methylated CHTOP and ZNF148. Interacts with NOL9. Interacts with CCAR2.

Its subcellular location is the nucleus. The protein localises to the nucleolus. The protein resides in the nucleoplasm. It localises to the cytoplasm. Its activity is regulated as follows. On oxidative stress, SENP3 degradation is blocked by inhibition of its ubiquitination, which stabilizes it as it accumulates in the nucleoplasm. Its function is as follows. Protease that releases SUMO2 and SUMO3 monomers from sumoylated substrates, but has only weak activity against SUMO1 conjugates. Deconjugates SUMO2 from MEF2D, which increases its transcriptional activation capability. Deconjugates SUMO2 and SUMO3 from CDCA8. Redox sensor that, when redistributed into nucleoplasm, can act as an effector to enhance HIF1A transcriptional activity by desumoylating EP300. Required for rRNA processing through deconjugation of SUMO2 and SUMO3 from nucleophosmin, NPM1. Plays a role in the regulation of sumoylation status of ZNF148. Functions as a component of the Five Friends of Methylated CHTOP (5FMC) complex; the 5FMC complex is recruited to ZNF148 by methylated CHTOP, leading to desumoylation of ZNF148 and subsequent transactivation of ZNF148 target genes. Deconjugates SUMO2 from KAT5. Catalyzes desumoylation of MRE11. This Mus musculus (Mouse) protein is Sentrin-specific protease 3 (Senp3).